Consider the following 166-residue polypeptide: Urocortin-3 (166 aa).

An N-terminal signal peptide occupies residues 1–23 (MLVPAPFLLVLLLLLGAPQVGLS). The propeptide occupies 24 to 123 (QRSPKAGSSP…QDKAKSDRRT (100 aa)). Residues 41–51 (REAEKSQRKDT) show a composition bias toward basic and acidic residues. Positions 41-123 (REAEKSQRKD…QDKAKSDRRT (83 aa)) are disordered. Positions 68–77 (EDQEGQEEED) are enriched in acidic residues. Gly residues predominate over residues 86–96 (SVGGGGGGGAG). Over residues 113–123 (SQDKAKSDRRT) the composition is skewed to basic and acidic residues. Ile-162 carries the post-translational modification Isoleucine amide.

It belongs to the sauvagine/corticotropin-releasing factor/urotensin I family. As to quaternary structure, binds with high affinity to CRF receptors 2-alpha and 2-beta.

The protein resides in the secreted. In terms of biological role, suppresses food intake, delays gastric emptying and decreases heat-induced edema. Might represent an endogenous ligand for maintaining homeostasis after stress. This is Urocortin-3 (UCN3) from Bos taurus (Bovine).